A 409-amino-acid polypeptide reads, in one-letter code: MTYPERPLLHLLTRTSLVVQIIVGLVAGLLLASFFPAAALKVGFIGKVFVSALKAVAPVLVFVLVMASIANHKQGQQTHIRPILLLYLVGTFSAAVVAVIASFAFPSSLVLASQPGEMSPPGGIAEVLQALLLSVVDNPVNALISANFIGILAWAIGLGIAFRHASDSTRNLLSELSGGVSLIVKVVIRFAPLGIFGLVASTFAESGVEALKGYAHLLVVLLGCMLFVAFVVNPLIVFLKIRRNPYPLVLTCLRESGMTAFFTRSSAANIPVNLQLCERLGLHEDTYSVSIPLGATINMAGAAITITVLTLAAVHTLGIDVDVPTAILLSVVASVCACGASGVAGGSLLLIPLACSLFGIPSEVAMQVVAVGFIIAILQDSAETALNSSTDVLFTAAACQAEERKASAA.

Transmembrane regions (helical) follow at residues 17–37, 49–69, 83–103, 142–162, 180–200, 218–238, 299–319, 331–351, and 357–377; these read LVVQIIVGLVAGLLLASFFPA, FVSALKAVAPVLVFVLVMASI, ILLLYLVGTFSAAVVAVIASF, ALISANFIGILAWAIGLGIAF, VSLIVKVVIRFAPLGIFGLVA, LVVLLGCMLFVAFVVNPLIVF, MAGAAITITVLTLAAVHTLGI, VVASVCACGASGVAGGSLLLI, and LFGIPSEVAMQVVAVGFIIAI.

It belongs to the dicarboxylate/amino acid:cation symporter (DAACS) (TC 2.A.23) family.

The protein resides in the cell inner membrane. It carries out the reaction L-serine(in) + Na(+)(in) = L-serine(out) + Na(+)(out). It catalyses the reaction L-threonine(in) + Na(+)(in) = L-threonine(out) + Na(+)(out). Functionally, involved in the import of serine and threonine into the cell, with the concomitant import of sodium (symport system). The chain is Serine/threonine transporter SstT from Pseudomonas paraeruginosa (strain DSM 24068 / PA7) (Pseudomonas aeruginosa (strain PA7)).